The following is an 827-amino-acid chain: Penicillin-binding protein 1A (827 aa).

At 1–18 (MGKKKKKRKSSAFKIILN) the chain is on the cytoplasmic side. A helical; Signal-anchor for type II membrane protein transmembrane segment spans residues 19-39 (VFLSIFLVAGVAFGGIVFAMI). Residues 40–827 (KTAPPLNVQQ…QNHEDNKNKQ (788 aa)) are Extracellular-facing. The segment at 57-229 (SILYDDKGQY…PSVYYPYSSA (173 aa)) is transglycosylase. Residue Glu-96 is the Proton donor; for transglycosylase activity of the active site. Residues 357–641 (ASAVIMDYHN…AARLWGDIMK (285 aa)) are transpeptidase. Residue Ser-398 is the Acyl-ester intermediate; for transpeptidase activity of the active site. The segment at 755–827 (GSLPPTEEKN…QNHEDNKNKQ (73 aa)) is disordered. The span at 760–790 (TEEKNNSNTRDKNKDKNKDKDKNKNKDKNPS) shows a compositional bias: basic and acidic residues. A compositionally biased stretch (low complexity) spans 791 to 817 (QDKPNNNNNNNNNDNNNNTKPPENDSN). Over residues 818-827 (QNHEDNKNKQ) the composition is skewed to basic and acidic residues.

This sequence in the N-terminal section; belongs to the glycosyltransferase 51 family. It in the C-terminal section; belongs to the transpeptidase family.

It localises to the cell membrane. It carries out the reaction [GlcNAc-(1-&gt;4)-Mur2Ac(oyl-L-Ala-gamma-D-Glu-L-Lys-D-Ala-D-Ala)](n)-di-trans,octa-cis-undecaprenyl diphosphate + beta-D-GlcNAc-(1-&gt;4)-Mur2Ac(oyl-L-Ala-gamma-D-Glu-L-Lys-D-Ala-D-Ala)-di-trans,octa-cis-undecaprenyl diphosphate = [GlcNAc-(1-&gt;4)-Mur2Ac(oyl-L-Ala-gamma-D-Glu-L-Lys-D-Ala-D-Ala)](n+1)-di-trans,octa-cis-undecaprenyl diphosphate + di-trans,octa-cis-undecaprenyl diphosphate + H(+). It catalyses the reaction Preferential cleavage: (Ac)2-L-Lys-D-Ala-|-D-Ala. Also transpeptidation of peptidyl-alanyl moieties that are N-acyl substituents of D-alanine.. It functions in the pathway cell wall biogenesis; peptidoglycan biosynthesis. In terms of biological role, cell wall formation. Synthesis of cross-linked peptidoglycan from the lipid intermediates. The enzyme has a penicillin-insensitive transglycosylase N-terminal domain (formation of linear glycan strands) and a penicillin-sensitive transpeptidase C-terminal domain (cross-linking of the peptide subunits). This Clostridium botulinum (strain Langeland / NCTC 10281 / Type F) protein is Penicillin-binding protein 1A (pbpA).